Consider the following 301-residue polypeptide: Acetylglutamate kinase (301 aa).

Residues G72–G73, R94, and N199 contribute to the substrate site.

This sequence belongs to the acetylglutamate kinase family. ArgB subfamily.

Its subcellular location is the cytoplasm. The catalysed reaction is N-acetyl-L-glutamate + ATP = N-acetyl-L-glutamyl 5-phosphate + ADP. It functions in the pathway amino-acid biosynthesis; L-arginine biosynthesis; N(2)-acetyl-L-ornithine from L-glutamate: step 2/4. In terms of biological role, catalyzes the ATP-dependent phosphorylation of N-acetyl-L-glutamate. This is Acetylglutamate kinase from Bartonella tribocorum (strain CIP 105476 / IBS 506).